The following is a 185-amino-acid chain: Adenylyl-sulfate kinase (185 aa).

13-20 serves as a coordination point for ATP; that stretch reads GLSGAGKS. Catalysis depends on S86, which acts as the Phosphoserine intermediate.

Belongs to the APS kinase family.

It carries out the reaction adenosine 5'-phosphosulfate + ATP = 3'-phosphoadenylyl sulfate + ADP + H(+). It functions in the pathway sulfur metabolism; hydrogen sulfide biosynthesis; sulfite from sulfate: step 2/3. Its function is as follows. Catalyzes the synthesis of activated sulfate. The polypeptide is Adenylyl-sulfate kinase (Myxococcus xanthus (strain DK1622)).